We begin with the raw amino-acid sequence, 582 residues long: Formate--tetrahydrofolate ligase (582 aa).

65–72 (TPLGEGKT) is a binding site for ATP.

It belongs to the formate--tetrahydrofolate ligase family.

It catalyses the reaction (6S)-5,6,7,8-tetrahydrofolate + formate + ATP = (6R)-10-formyltetrahydrofolate + ADP + phosphate. The protein operates within one-carbon metabolism; tetrahydrofolate interconversion. This chain is Formate--tetrahydrofolate ligase, found in Vibrio cholerae serotype O1 (strain ATCC 39315 / El Tor Inaba N16961).